Reading from the N-terminus, the 679-residue chain is Glycine--tRNA ligase beta subunit (679 aa).

The protein belongs to the class-II aminoacyl-tRNA synthetase family. Tetramer of two alpha and two beta subunits.

The protein localises to the cytoplasm. It carries out the reaction tRNA(Gly) + glycine + ATP = glycyl-tRNA(Gly) + AMP + diphosphate. The chain is Glycine--tRNA ligase beta subunit from Streptococcus uberis (strain ATCC BAA-854 / 0140J).